The chain runs to 308 residues: Phosphoribosylaminoimidazole-succinocarboxamide synthase (308 aa).

The protein belongs to the SAICAR synthetase family.

It carries out the reaction 5-amino-1-(5-phospho-D-ribosyl)imidazole-4-carboxylate + L-aspartate + ATP = (2S)-2-[5-amino-1-(5-phospho-beta-D-ribosyl)imidazole-4-carboxamido]succinate + ADP + phosphate + 2 H(+). The protein operates within purine metabolism; IMP biosynthesis via de novo pathway; 5-amino-1-(5-phospho-D-ribosyl)imidazole-4-carboxamide from 5-amino-1-(5-phospho-D-ribosyl)imidazole-4-carboxylate: step 1/2. The polypeptide is Phosphoribosylaminoimidazole-succinocarboxamide synthase (Xanthomonas oryzae pv. oryzae (strain PXO99A)).